Consider the following 172-residue polypeptide: Protein LOL2 (172 aa).

Putative zinc finger regions lie at residues 4-34, 44-74, and 82-112; these read QIVC…VSST, HLIC…VNLV, and HLNC…ITNT.

It is found in the nucleus. In terms of biological role, putative zinc finger that may be involved in programmed cell death and defense response. The protein is Protein LOL2 (LOL2) of Oryza sativa subsp. japonica (Rice).